The following is a 272-amino-acid chain: PILR alpha-associated neural protein (272 aa).

The N-terminal stretch at 1 to 27 (MWPAQLLSQLLPLWPLLLLPLSLPAQG) is a signal peptide. Residues 25 to 93 (AQGSSHRSPP…PSGFEEGPPS (69 aa)) are disordered. Residues 28-174 (SSHRSPPAPA…FGGRGEGVDP (147 aa)) are Extracellular-facing. Thr-136 carries an O-linked (GalNAc...) threonine glycan. A helical transmembrane segment spans residues 175–195 (QLYVTITISIIIVLVATGIIF). Topologically, residues 196-272 (KFCWDRSQKR…KGAPAFQLNR (77 aa)) are cytoplasmic. A disordered region spans residues 205 to 272 (RRRPSGQQGA…KGAPAFQLNR (68 aa)). Over residues 209 to 225 (SGQQGALRQEESQQPLT) the composition is skewed to polar residues.

In terms of processing, O-glycosylation at Thr-136 is essential for recognition by PILRA.

It is found in the membrane. Functionally, acts as a ligand for PILRA in neuronal tissues, where it may be involved in immune regulation. In Rattus norvegicus (Rat), this protein is PILR alpha-associated neural protein (Pianp).